We begin with the raw amino-acid sequence, 570 residues long: Urease subunit alpha (570 aa).

The 439-residue stretch at 132 to 570 (GGIDTHVHFL…VPMARRYFLF (439 aa)) folds into the Urease domain. Residues His137, His139, and Lys220 each contribute to the Ni(2+) site. Lys220 is subject to N6-carboxylysine. His222 is a binding site for substrate. Residues His249 and His275 each contribute to the Ni(2+) site. His323 (proton donor) is an active-site residue. Residue Asp363 participates in Ni(2+) binding.

Belongs to the metallo-dependent hydrolases superfamily. Urease alpha subunit family. In terms of assembly, heterotrimer of UreA (gamma), UreB (beta) and UreC (alpha) subunits. Three heterotrimers associate to form the active enzyme. Requires Ni cation as cofactor. In terms of processing, carboxylation allows a single lysine to coordinate two nickel ions.

It is found in the cytoplasm. It carries out the reaction urea + 2 H2O + H(+) = hydrogencarbonate + 2 NH4(+). Its pathway is nitrogen metabolism; urea degradation; CO(2) and NH(3) from urea (urease route): step 1/1. The protein is Urease subunit alpha of Corynebacterium glutamicum (strain ATCC 13032 / DSM 20300 / JCM 1318 / BCRC 11384 / CCUG 27702 / LMG 3730 / NBRC 12168 / NCIMB 10025 / NRRL B-2784 / 534).